The sequence spans 400 residues: MHADTLDAMLHHELPHAAAGCQQAYGRIVTACQNTVTAIALAITRDVAASEDIAQEAFLRAWQRLAQLHQPASFLPWLRQITRNLARDWLRSHRHRPLSGEAADLAIAMAADPSPSPAEQALQVEEERAALEIMSALPNDSREILLLYYREGQRSQQVASLLGLSDAAVRKRLSRARATVRNELLQRFDTFARGSAPGVAFATTVTAATMLAAPGTASAAIALGGIGSLGGVGKLGASGLSGSALTSGSAAGALSVLLGMPMAIALLAITGVTLTTYMSGAYLLRFATTAREAAAIRGFTRLSTLTAALTCGAPLLLRAFGAPKWLALCVLAVGMSVVCYHTLGTLPRIMQPMLERDARRRGTTRPPLLYRCMFSRSAIAVSLAAVIVPIAYRYGVLGLV.

The Polymerase core binding signature appears at 62–75; it reads WQRLAQLHQPASFL. Positions 165 to 184 form a DNA-binding region, H-T-H motif; the sequence is SDAAVRKRLSRARATVRNEL.

Belongs to the sigma-70 factor family. ECF subfamily.

Functionally, sigma factors are initiation factors that promote the attachment of RNA polymerase to specific initiation sites and are then released. This sigma factor is involved in lipopolysaccharide biosynthesis and pathogenicity. This is Probable RNA polymerase sigma factor RfaY (rfaY) from Xanthomonas campestris pv. campestris (strain ATCC 33913 / DSM 3586 / NCPPB 528 / LMG 568 / P 25).